Consider the following 2120-residue polypeptide: Separin (2120 aa).

Ser-1126 bears the Phosphoserine mark. Residues 1299-1355 form a disordered region; sequence IKSVPGSEPSKTQGQKRSGRGRQKLASAPLRLNNTSQKGLEGRGLPCTPKPPDRIRQ. Residues Ser-1396 and Ser-1399 each carry the phosphoserine modification. Disordered stretches follow at residues 1412–1485 and 1507–1561; these read AEEP…PEIM and GSDG…PRLR. 2 stretches are compositionally biased toward basic residues: residues 1418 to 1432 and 1454 to 1463; these read RGTASRGRGRARKGL and RSRRAKKVAS. The segment covering 1464-1473 has biased composition (basic and acidic residues); it reads RHCEERRPQR. The residue at position 1508 (Ser-1508) is a Phosphoserine. The span at 1548–1558 shows a compositional bias: basic and acidic residues; sequence PDKESDKDLGP. One can recognise a Peptidase C50 domain in the interval 1945 to 2040; the sequence is PRSTFYVLNP…SAALAVRGNL (96 aa). Cys-2029 is a catalytic residue.

In terms of assembly, interacts with PTTG1. Interacts with RAD21. Post-translationally, autocleaves. This function, which is not essential for its protease activity, is unknown. In terms of processing, phosphorylated by CDK1. There are 8 Ser/Thr phosphorylation sites. Among them, Ser-1126 phosphorylation is the major site, which conducts to the enzyme inactivation.

It is found in the cytoplasm. Its subcellular location is the nucleus. It carries out the reaction All bonds known to be hydrolyzed by this endopeptidase have arginine in P1 and an acidic residue in P4. P6 is often occupied by an acidic residue or by a hydroxy-amino-acid residue, the phosphorylation of which enhances cleavage.. Regulated by at least two independent mechanisms. First, it is inactivated via its interaction with securin/PTTG1, which probably covers its active site. The association with PTTG1 is not only inhibitory, since PTTG1 is also required for activating it, the enzyme being inactive in cells in which PTTG1 is absent. PTTG1 degradation at anaphase, liberates it and triggers RAD21 cleavage. Second, phosphorylation at Ser-1126 inactivates it. The complete phosphorylation during mitosis, is removed when cells undergo anaphase. Activation of the enzyme at the metaphase-anaphase transition probably requires the removal of both securin and inhibitory phosphate. Caspase-like protease, which plays a central role in the chromosome segregation by cleaving the SCC1/RAD21 subunit of the cohesin complex at the onset of anaphase. During most of the cell cycle, it is inactivated by different mechanisms. This Homo sapiens (Human) protein is Separin (ESPL1).